The sequence spans 346 residues: G-protein coupled receptor 42 (346 aa).

Residues 1-19 are Extracellular-facing; sequence MDTGPDQSYFSGNHWFVFS. A helical transmembrane segment spans residues 20–40; it reads VYLLTFLVGLPLNLLALVVFV. Topologically, residues 41-47 are cytoplasmic; it reads GKLRCRP. The helical transmembrane segment at 48-68 threads the bilayer; sequence VAVDVLLLNLTASDLLLLLFL. At 69 to 90 the chain is on the extracellular side; it reads PFRMVEAANGMHWPLPFILCPL. A helical transmembrane segment spans residues 91-111; that stretch reads SGFIFFTTIYLTALFLAAVSI. The Cytoplasmic portion of the chain corresponds to 112 to 132; sequence ERFLSVAHPLWYKTRPRLGQA. Residues 133 to 153 form a helical membrane-spanning segment; the sequence is GLVSVACWLLASAHCSVVYVI. The Extracellular segment spans residues 154 to 178; sequence EFSGDISHSQGTNGTCYLEFRKDQL. Residue N166 is glycosylated (N-linked (GlcNAc...) asparagine). The helical transmembrane segment at 179-199 threads the bilayer; it reads AILLPVRLEMAVVLFVVPLII. Residues 200–222 are Cytoplasmic-facing; the sequence is TSYCYSRLVWILGRGGSHRRQRR. The chain crosses the membrane as a helical span at residues 223–243; it reads VAGLVAATLLNFLVCFGPYNV. Over 244–258 the chain is Extracellular; that stretch reads SHVVGYICGESPVWR. A helical membrane pass occupies residues 259 to 279; that stretch reads IYVTLLSTLNSCVDPFVYYFS. The Cytoplasmic portion of the chain corresponds to 280–346; the sequence is SSGFQADFHE…TGGQVACAEN (67 aa). Positions 307 to 330 are enriched in basic and acidic residues; sequence MELKEQKGGEEQRADRPAERKTSE. The tract at residues 307–346 is disordered; it reads MELKEQKGGEEQRADRPAERKTSEHSQGCGTGGQVACAEN.

This sequence belongs to the G-protein coupled receptor 1 family.

The protein resides in the cell membrane. Functionally, g protein-coupled receptor that is activated by short chain fatty acids (SCFAs), such as propionate. Hence may play a role in the regulation of whole-body energy homeostasis and/or in intestinal immunity. The polypeptide is G-protein coupled receptor 42 (GPR42) (Homo sapiens (Human)).